The primary structure comprises 276 residues: Small ribosomal subunit protein uS2 (276 aa).

Positions 226–276 are disordered; it reads KKAREERQLAAAREAAGEPKSEDAPAEAAATEEAPATEAPAAEAQQENAAE. Positions 251 to 276 are enriched in low complexity; the sequence is AEAAATEEAPATEAPAAEAQQENAAE.

The protein belongs to the universal ribosomal protein uS2 family.

This chain is Small ribosomal subunit protein uS2, found in Corynebacterium efficiens (strain DSM 44549 / YS-314 / AJ 12310 / JCM 11189 / NBRC 100395).